The primary structure comprises 211 residues: Thymidylate kinase (211 aa).

10–17 is a binding site for ATP; the sequence is GPDGAGKT.

The protein belongs to the thymidylate kinase family.

It carries out the reaction dTMP + ATP = dTDP + ADP. Functionally, phosphorylation of dTMP to form dTDP in both de novo and salvage pathways of dTTP synthesis. This is Thymidylate kinase from Lactococcus lactis subsp. cremoris (strain SK11).